Consider the following 106-residue polypeptide: Integration host factor subunit beta (106 aa).

A disordered region spans residues 57 to 106 (PARAGRNPRTGEHVPVEQKSVPFFKTGKEMRERLNRDGLDGATPPSPPAA). Positions 82–95 (TGKEMRERLNRDGL) are enriched in basic and acidic residues.

The protein belongs to the bacterial histone-like protein family. As to quaternary structure, heterodimer of an alpha and a beta chain.

Its function is as follows. This protein is one of the two subunits of integration host factor, a specific DNA-binding protein that functions in genetic recombination as well as in transcriptional and translational control. The polypeptide is Integration host factor subunit beta (Afipia carboxidovorans (strain ATCC 49405 / DSM 1227 / KCTC 32145 / OM5) (Oligotropha carboxidovorans)).